Consider the following 161-residue polypeptide: Transcriptional repressor NrdR (161 aa).

Positions 1-11 (MRCPSCSSLDT) are enriched in polar residues. Residues 1–20 (MRCPSCSSLDTQVKDSRPTE) are disordered. The segment at 3 to 34 (CPSCSSLDTQVKDSRPTEDSAVIRRRRVCMAC) is a zinc-finger region. In terms of domain architecture, ATP-cone spans 49–139 (LTVIKRNGRR…VYRNFREAKD (91 aa)).

Belongs to the NrdR family. It depends on Zn(2+) as a cofactor.

Negatively regulates transcription of bacterial ribonucleotide reductase nrd genes and operons by binding to NrdR-boxes. This chain is Transcriptional repressor NrdR, found in Rhodopseudomonas palustris (strain BisB18).